The following is an 86-amino-acid chain: Myosin light chain alkali (86 aa).

The 36-residue stretch at 11–46 (GCYEDFIECLKLYDKEENGTMMLAELQHALLALGES) folds into the EF-hand domain.

In terms of assembly, myosin is a hexamer of 2 heavy chains and 4 light chains.

The polypeptide is Myosin light chain alkali (Mlc1) (Drosophila subobscura (Fruit fly)).